A 642-amino-acid chain; its full sequence is Threonine--tRNA ligase (642 aa).

Positions 1–61 (MPVITLPDGS…ESDAQLAIIT (61 aa)) constitute a TGS domain. The tract at residues 243 to 534 (DHRKIGKQLD…LTEEYAGFFP (292 aa)) is catalytic. The Zn(2+) site is built by cysteine 334, histidine 385, and histidine 511.

The protein belongs to the class-II aminoacyl-tRNA synthetase family. As to quaternary structure, homodimer. It depends on Zn(2+) as a cofactor.

Its subcellular location is the cytoplasm. It catalyses the reaction tRNA(Thr) + L-threonine + ATP = L-threonyl-tRNA(Thr) + AMP + diphosphate + H(+). In terms of biological role, catalyzes the attachment of threonine to tRNA(Thr) in a two-step reaction: L-threonine is first activated by ATP to form Thr-AMP and then transferred to the acceptor end of tRNA(Thr). Also edits incorrectly charged L-seryl-tRNA(Thr). The chain is Threonine--tRNA ligase from Yersinia pseudotuberculosis serotype O:1b (strain IP 31758).